Here is a 180-residue protein sequence, read N- to C-terminus: MDLPGPIRDILLVPLELGLILGGLEVVLLTNIIYSALSLGPVLVCISLLYILLNADFVAAAQILIYVGAVNVLIVFAVMLMNNQKYPNFVPLWTVGDGITLVVCTSLFCSLITIILNTSWSEISMTTKSNQILEQDLTNNVQRIGAHLSTDFFLPFELLSIILLVALVGAITIARREEIV.

A run of 5 helical transmembrane segments spans residues 10–30, 32–52, 57–77, 95–115, and 153–173; these read ILLVPLELGLILGGLEVVLLT, IIYSALSLGPVLVCISLLYIL, FVAAAQILIYVGAVNVLIVFA, VGDGITLVVCTSLFCSLITII, and FLPFELLSIILLVALVGAITI.

Belongs to the complex I subunit 6 family. NDH is composed of at least 16 different subunits, 5 of which are encoded in the nucleus.

It localises to the plastid. It is found in the chloroplast thylakoid membrane. The catalysed reaction is a plastoquinone + NADH + (n+1) H(+)(in) = a plastoquinol + NAD(+) + n H(+)(out). The enzyme catalyses a plastoquinone + NADPH + (n+1) H(+)(in) = a plastoquinol + NADP(+) + n H(+)(out). In terms of biological role, NDH shuttles electrons from NAD(P)H:plastoquinone, via FMN and iron-sulfur (Fe-S) centers, to quinones in the photosynthetic chain and possibly in a chloroplast respiratory chain. The immediate electron acceptor for the enzyme in this species is believed to be plastoquinone. Couples the redox reaction to proton translocation, and thus conserves the redox energy in a proton gradient. This chain is NAD(P)H-quinone oxidoreductase subunit 6, chloroplastic (ndhG), found in Cycas taitungensis (Prince sago).